Here is a 120-residue protein sequence, read N- to C-terminus: NAD(P)H-quinone oxidoreductase subunit 3, chloroplastic (120 aa).

The next 3 helical transmembrane spans lie at 9–29 (IFWA…LISG), 64–84 (MFAL…PWAM), and 88–108 (VLGV…ILGL).

It belongs to the complex I subunit 3 family. In terms of assembly, NDH is composed of at least 16 different subunits, 5 of which are encoded in the nucleus.

It localises to the plastid. The protein localises to the chloroplast thylakoid membrane. The enzyme catalyses a plastoquinone + NADH + (n+1) H(+)(in) = a plastoquinol + NAD(+) + n H(+)(out). The catalysed reaction is a plastoquinone + NADPH + (n+1) H(+)(in) = a plastoquinol + NADP(+) + n H(+)(out). NDH shuttles electrons from NAD(P)H:plastoquinone, via FMN and iron-sulfur (Fe-S) centers, to quinones in the photosynthetic chain and possibly in a chloroplast respiratory chain. The immediate electron acceptor for the enzyme in this species is believed to be plastoquinone. Couples the redox reaction to proton translocation, and thus conserves the redox energy in a proton gradient. This chain is NAD(P)H-quinone oxidoreductase subunit 3, chloroplastic, found in Olimarabidopsis pumila (Dwarf rocket).